Here is a 387-residue protein sequence, read N- to C-terminus: Probable peptidoglycan glycosyltransferase FtsW (387 aa).

The next 9 helical transmembrane spans lie at 20–40 (LYLL…VGSA), 61–81 (LFLL…LAFW), 86–106 (PVML…GIGV), 149–169 (TIRG…LLLL), 172–192 (DFGA…LGGA), 194–214 (LWHF…LAWY), 284–304 (LMGS…VLLI), 322–342 (GLGI…MGVL), and 349–369 (LPLM…VALI).

Belongs to the SEDS family. FtsW subfamily.

Its subcellular location is the cell inner membrane. The catalysed reaction is [GlcNAc-(1-&gt;4)-Mur2Ac(oyl-L-Ala-gamma-D-Glu-L-Lys-D-Ala-D-Ala)](n)-di-trans,octa-cis-undecaprenyl diphosphate + beta-D-GlcNAc-(1-&gt;4)-Mur2Ac(oyl-L-Ala-gamma-D-Glu-L-Lys-D-Ala-D-Ala)-di-trans,octa-cis-undecaprenyl diphosphate = [GlcNAc-(1-&gt;4)-Mur2Ac(oyl-L-Ala-gamma-D-Glu-L-Lys-D-Ala-D-Ala)](n+1)-di-trans,octa-cis-undecaprenyl diphosphate + di-trans,octa-cis-undecaprenyl diphosphate + H(+). Its pathway is cell wall biogenesis; peptidoglycan biosynthesis. Peptidoglycan polymerase that is essential for cell division. The protein is Probable peptidoglycan glycosyltransferase FtsW of Nitrosococcus halophilus (strain Nc4).